We begin with the raw amino-acid sequence, 37 residues long: Large ribosomal subunit protein bL36 (37 aa).

This sequence belongs to the bacterial ribosomal protein bL36 family.

The polypeptide is Large ribosomal subunit protein bL36 (Dechloromonas aromatica (strain RCB)).